Reading from the N-terminus, the 97-residue chain is Cytochrome c oxidase subunit 4 isoform 1, mitochondrial (97 aa).

Residues 1–22 (MLATRVFNLIGRRAISTSVCVR) constitute a mitochondrion transit peptide. The residue at position 29 (K29) is an N6-acetyllysine; alternate. K29 is subject to N6-succinyllysine; alternate. Residue K53 is modified to N6-acetyllysine. S56 and S58 each carry phosphoserine. K60 is modified (N6-acetyllysine; alternate). Residue K60 is modified to N6-succinyllysine; alternate. K67 carries the N6-acetyllysine modification.

Belongs to the cytochrome c oxidase IV family. In terms of assembly, component of the cytochrome c oxidase (complex IV, CIV), a multisubunit enzyme composed of 14 subunits. The complex is composed of a catalytic core of 3 subunits MT-CO1, MT-CO2 and MT-CO3, encoded in the mitochondrial DNA, and 11 supernumerary subunits COX4I, COX5A, COX5B, COX6A, COX6B, COX6C, COX7A, COX7B, COX7C, COX8 and NDUFA4, which are encoded in the nuclear genome. The complex exists as a monomer or a dimer and forms supercomplexes (SCs) in the inner mitochondrial membrane with NADH-ubiquinone oxidoreductase (complex I, CI) and ubiquinol-cytochrome c oxidoreductase (cytochrome b-c1 complex, complex III, CIII), resulting in different assemblies (supercomplex SCI(1)III(2)IV(1) and megacomplex MCI(2)III(2)IV(2)). Interacts with PHB2; the interaction decreases in absence of SPHK2. Interacts with AFG1L. Interacts with ABCB7; this interaction allows the regulation of cellular iron homeostasis and cellular reactive oxygen species (ROS) levels in cardiomyocytes. Interacts with FLVCR2; this interaction occurs in the absence of heme and is disrupted upon heme binding. Interacts with IRGC.

It is found in the mitochondrion inner membrane. It participates in energy metabolism; oxidative phosphorylation. Component of the cytochrome c oxidase, the last enzyme in the mitochondrial electron transport chain which drives oxidative phosphorylation. The respiratory chain contains 3 multisubunit complexes succinate dehydrogenase (complex II, CII), ubiquinol-cytochrome c oxidoreductase (cytochrome b-c1 complex, complex III, CIII) and cytochrome c oxidase (complex IV, CIV), that cooperate to transfer electrons derived from NADH and succinate to molecular oxygen, creating an electrochemical gradient over the inner membrane that drives transmembrane transport and the ATP synthase. Cytochrome c oxidase is the component of the respiratory chain that catalyzes the reduction of oxygen to water. Electrons originating from reduced cytochrome c in the intermembrane space (IMS) are transferred via the dinuclear copper A center (CU(A)) of subunit 2 and heme A of subunit 1 to the active site in subunit 1, a binuclear center (BNC) formed by heme A3 and copper B (CU(B)). The BNC reduces molecular oxygen to 2 water molecules using 4 electrons from cytochrome c in the IMS and 4 protons from the mitochondrial matrix. This Sus scrofa (Pig) protein is Cytochrome c oxidase subunit 4 isoform 1, mitochondrial (COX4I1).